The following is a 363-amino-acid chain: NAD(P)H-quinone oxidoreductase subunit 1, chloroplastic (363 aa).

The next 6 membrane-spanning stretches (helical) occupy residues Trp28–Val48, Phe98–Phe118, Ile129–Gly149, Phe253–Val273, Val300–Val320, and Leu336–Thr356.

It belongs to the complex I subunit 1 family. NDH is composed of at least 16 different subunits, 5 of which are encoded in the nucleus.

Its subcellular location is the plastid. The protein resides in the chloroplast thylakoid membrane. The enzyme catalyses a plastoquinone + NADH + (n+1) H(+)(in) = a plastoquinol + NAD(+) + n H(+)(out). It catalyses the reaction a plastoquinone + NADPH + (n+1) H(+)(in) = a plastoquinol + NADP(+) + n H(+)(out). Functionally, NDH shuttles electrons from NAD(P)H:plastoquinone, via FMN and iron-sulfur (Fe-S) centers, to quinones in the photosynthetic chain and possibly in a chloroplast respiratory chain. The immediate electron acceptor for the enzyme in this species is believed to be plastoquinone. Couples the redox reaction to proton translocation, and thus conserves the redox energy in a proton gradient. This is NAD(P)H-quinone oxidoreductase subunit 1, chloroplastic from Phaseolus vulgaris (Kidney bean).